We begin with the raw amino-acid sequence, 89 residues long: UPF0367 protein CYB_2632 (89 aa).

Residues 69–89 are disordered; it reads SKSGSASPMGTRPGFLAQLQS.

Belongs to the UPF0367 family.

The sequence is that of UPF0367 protein CYB_2632 from Synechococcus sp. (strain JA-2-3B'a(2-13)) (Cyanobacteria bacterium Yellowstone B-Prime).